The following is a 306-amino-acid chain: UDP-N-acetylenolpyruvoylglucosamine reductase (306 aa).

The FAD-binding PCMH-type domain occupies 34-199 (RVGGPAQLLF…TSVRLRGAIA (166 aa)). Residue Arg179 is part of the active site. The Proton donor role is filled by Ser228. The active site involves Glu298.

Belongs to the MurB family. Requires FAD as cofactor.

It localises to the cytoplasm. The enzyme catalyses UDP-N-acetyl-alpha-D-muramate + NADP(+) = UDP-N-acetyl-3-O-(1-carboxyvinyl)-alpha-D-glucosamine + NADPH + H(+). The protein operates within cell wall biogenesis; peptidoglycan biosynthesis. Its function is as follows. Cell wall formation. The polypeptide is UDP-N-acetylenolpyruvoylglucosamine reductase (Rhodopseudomonas palustris (strain BisA53)).